The following is a 429-amino-acid chain: ATP-sensitive inward rectifier potassium channel 12 (429 aa).

Residues 1 to 76 lie on the Cytoplasmic side of the membrane; the sequence is MTAGRVNPYS…IADMFTTCVD (76 aa). Residues 77–103 traverse the membrane as a helical segment; the sequence is IRWRYMLLLFSLAFLVSWLLFGLIFWL. Residues R78 and R80 each coordinate a 1,2-diacyl-sn-glycero-3-phospho-(1D-myo-inositol-4,5-bisphosphate). Residues 104-129 are Extracellular-facing; the sequence is IALIHGDLENPGGDDTFKPCVLQVNG. A disulfide bridge links C123 with C155. Positions 130 to 146 form an intramembrane region, helical; Pore-forming; it reads FVAAFLFSIETQTTIGY. Residues T143, I144, G145, and Y146 each coordinate K(+). The Selectivity filter signature appears at 143-148; the sequence is TIGYGF. Residues 147 to 155 are Extracellular-facing; sequence GFRCVTEEC. The chain crosses the membrane as a helical span at residues 156–183; sequence PLAVFMVVVQSIVGCIIDSFMIGAIMAK. A 1,2-diacyl-sn-glycero-3-phospho-(1D-myo-inositol-4,5-bisphosphate) contacts are provided by K183 and K188. Residues 184 to 429 are Cytoplasmic-facing; it reads MARPKKRAQT…QRSYRRESEI (246 aa). Positions 386–407 are disordered; it reads RDEDEEDDDSRGLDDLSPDNRH. Residues 395–407 show a composition bias toward basic and acidic residues; it reads SRGLDDLSPDNRH.

Belongs to the inward rectifier-type potassium channel family. As to quaternary structure, homotetramer.

It is found in the membrane. It localises to the cell membrane. The protein localises to the sarcolemma. The protein resides in the T-tubule. It carries out the reaction K(+)(in) = K(+)(out). With respect to regulation, activated by phosphatidylinositol 4,5-bisphosphate (PtdIns(4,5)P2). PtdIns(4,5)P2 binding to the cytoplasmic side of the channel triggers a conformation change leading to channel opening. Inward rectifying potassium channel that probably participates in controlling the resting membrane potential in electrically excitable cells. Probably participates in establishing action potential waveform and excitability of neuronal and muscle tissues. Inward rectifier potassium channels are characterized by a greater tendency to allow potassium to flow into the cell rather than out of it. Their voltage dependence is regulated by the concentration of extracellular potassium; as external potassium is raised, the voltage range of the channel opening shifts to more positive voltages. The inward rectification is mainly due to the blockage of outward current by internal magnesium. The sequence is that of ATP-sensitive inward rectifier potassium channel 12 (KCNJ12) from Gallus gallus (Chicken).